Here is a 313-residue protein sequence, read N- to C-terminus: Beta-ketoacyl-[acyl-carrier-protein] synthase III (313 aa).

Catalysis depends on residues Cys-112 and His-238. The interval 239–243 is ACP-binding; that stretch reads QANIR. Asn-268 is a catalytic residue.

Belongs to the thiolase-like superfamily. FabH family. In terms of assembly, homodimer.

Its subcellular location is the cytoplasm. The enzyme catalyses malonyl-[ACP] + acetyl-CoA + H(+) = 3-oxobutanoyl-[ACP] + CO2 + CoA. It functions in the pathway lipid metabolism; fatty acid biosynthesis. In terms of biological role, catalyzes the condensation reaction of fatty acid synthesis by the addition to an acyl acceptor of two carbons from malonyl-ACP. Catalyzes the first condensation reaction which initiates fatty acid synthesis and may therefore play a role in governing the total rate of fatty acid production. Possesses both acetoacetyl-ACP synthase and acetyl transacylase activities. Its substrate specificity determines the biosynthesis of branched-chain and/or straight-chain of fatty acids. The protein is Beta-ketoacyl-[acyl-carrier-protein] synthase III of Staphylococcus saprophyticus subsp. saprophyticus (strain ATCC 15305 / DSM 20229 / NCIMB 8711 / NCTC 7292 / S-41).